A 120-amino-acid polypeptide reads, in one-letter code: Large ribosomal subunit protein uL18 (120 aa).

The protein belongs to the universal ribosomal protein uL18 family. In terms of assembly, part of the 50S ribosomal subunit; part of the 5S rRNA/L5/L18/L25 subcomplex. Contacts the 5S and 23S rRNAs.

This is one of the proteins that bind and probably mediate the attachment of the 5S RNA into the large ribosomal subunit, where it forms part of the central protuberance. The sequence is that of Large ribosomal subunit protein uL18 from Rhodopseudomonas palustris (strain BisA53).